Reading from the N-terminus, the 130-residue chain is Fumarate reductase subunit C (130 aa).

A run of 3 helical transmembrane segments spans residues 37-57 (VWFS…PAGW), 60-80 (FVGF…LLAA), and 109-129 (VIKA…AVAL).

It belongs to the FrdC family. Part of an enzyme complex containing four subunits: a flavoprotein (FrdA), an iron-sulfur protein (FrdB), and two hydrophobic anchor proteins (FrdC and FrdD).

It localises to the cell inner membrane. Functionally, two distinct, membrane-bound, FAD-containing enzymes are responsible for the catalysis of fumarate and succinate interconversion; fumarate reductase is used in anaerobic growth, and succinate dehydrogenase is used in aerobic growth. Anchors the catalytic components of the fumarate reductase complex to the cell inner membrane, binds quinones. This is Fumarate reductase subunit C from Yersinia enterocolitica serotype O:8 / biotype 1B (strain NCTC 13174 / 8081).